The following is a 353-amino-acid chain: uncharacterized protein (353 aa).

Positions 1 to 30 (MHLRHLFSPRLRGSLLLGSLLVASSFSTLA) are cleaved as a signal peptide.

This is an uncharacterized protein from Salmonella typhimurium (strain LT2 / SGSC1412 / ATCC 700720).